A 162-amino-acid chain; its full sequence is SsrA-binding protein (162 aa).

The disordered stretch occupies residues 140–162 (EDRRHDIKERETKREMDRAMRRR).

It belongs to the SmpB family.

It is found in the cytoplasm. Required for rescue of stalled ribosomes mediated by trans-translation. Binds to transfer-messenger RNA (tmRNA), required for stable association of tmRNA with ribosomes. tmRNA and SmpB together mimic tRNA shape, replacing the anticodon stem-loop with SmpB. tmRNA is encoded by the ssrA gene; the 2 termini fold to resemble tRNA(Ala) and it encodes a 'tag peptide', a short internal open reading frame. During trans-translation Ala-aminoacylated tmRNA acts like a tRNA, entering the A-site of stalled ribosomes, displacing the stalled mRNA. The ribosome then switches to translate the ORF on the tmRNA; the nascent peptide is terminated with the 'tag peptide' encoded by the tmRNA and targeted for degradation. The ribosome is freed to recommence translation, which seems to be the essential function of trans-translation. In Myxococcus xanthus (strain DK1622), this protein is SsrA-binding protein.